The primary structure comprises 325 residues: RepFIB replication protein A (325 aa).

Residues 279–298 (APNDESKENPLPPSPAEKVS) are disordered.

Belongs to the initiator RepB protein family.

Functionally, this protein is essential for plasmid replication; it is involved in copy control functions. In vitro, binds to the DNA repeat units, BCDD'D'', EFG and HIJ. The chain is RepFIB replication protein A (repA) from Escherichia coli.